We begin with the raw amino-acid sequence, 705 residues long: Endoglucanase (705 aa).

Residues 1-23 form the signal peptide; that stretch reads MKILKNCILLIIFGLLSTQLINA. N-linked (GlcNAc...) asparagine glycosylation occurs at Asn-75. The Nucleophile role is filled by Asp-85. Catalysis depends on residues His-390, Asp-428, and Glu-437. Residues 455 to 556 form a disordered region; sequence NPSSTSVPTT…TPTETPSSGE (102 aa). The segment covering 462-552 has biased composition (low complexity); the sequence is PTTTPTVTET…TPTVTPTETP (91 aa). Positions 463 to 552 are pro/Thr repeats ('hinge') (Pro/Thr box); sequence TTTPTVTETP…TPTVTPTETP (90 aa).

This sequence belongs to the glycosyl hydrolase 9 (cellulase E) family.

It carries out the reaction Endohydrolysis of (1-&gt;4)-beta-D-glucosidic linkages in cellulose, lichenin and cereal beta-D-glucans.. Functionally, may digest the spore cell wall during germination, to release the enclosed amoeba. In Dictyostelium discoideum (Social amoeba), this protein is Endoglucanase (celA).